Consider the following 405-residue polypeptide: MSVKRGRHLFTSESVTEGHPDKICDQISDAILDEILKKDPNARVACETSVTTGLVLVAGEITTNTYVDIPSVVRQTIKGIGYTRAKYGFDAETCAVLTSIDEQSADIAQGVDKALEAREGQMTDAEIEAIGAGDQGLMFGFATNETEELMPLPISLSHKLSRRLTEVRKNGTLGYLRPDGKTQVTIEYDENDTPVRVDTIVLSTQHAPEVTLEQIQADLKEHVIEAVVPSALIDEETKYFINPTGRFVIGGPQGDAGLTGRKIIVDTYGGYARHGGGAFSGKDATKVDRSGAYAARYVAKNIVAAGLADKCEVQLAYAIGVAQPVSIAVNTFGTGKAAEDVLVELVRKHFDLRPAGIIRMLDLRRPIYKQTAAYGHFGRTDVPLPWEATDKAAALKEDVLKLEAN.

His19 contacts ATP. Asp21 provides a ligand contact to Mg(2+). Position 47 (Glu47) interacts with K(+). 2 residues coordinate L-methionine: Glu60 and Gln103. Positions 103–113 (QSADIAQGVDK) are flexible loop. Residues 179 to 181 (DGK), 246 to 247 (RF), Asp255, 261 to 262 (RK), Ala278, and Lys282 each bind ATP. Position 255 (Asp255) interacts with L-methionine. Lys286 is a binding site for L-methionine.

It belongs to the AdoMet synthase family. Homotetramer; dimer of dimers. Mg(2+) is required as a cofactor. Requires K(+) as cofactor.

Its subcellular location is the cytoplasm. The enzyme catalyses L-methionine + ATP + H2O = S-adenosyl-L-methionine + phosphate + diphosphate. Its pathway is amino-acid biosynthesis; S-adenosyl-L-methionine biosynthesis; S-adenosyl-L-methionine from L-methionine: step 1/1. Its function is as follows. Catalyzes the formation of S-adenosylmethionine (AdoMet) from methionine and ATP. The overall synthetic reaction is composed of two sequential steps, AdoMet formation and the subsequent tripolyphosphate hydrolysis which occurs prior to release of AdoMet from the enzyme. This Shouchella clausii (strain KSM-K16) (Alkalihalobacillus clausii) protein is S-adenosylmethionine synthase.